Reading from the N-terminus, the 293-residue chain is 33 kDa chaperonin (293 aa).

Disulfide bonds link Cys-236/Cys-238 and Cys-269/Cys-272.

This sequence belongs to the HSP33 family. In terms of processing, under oxidizing conditions two disulfide bonds are formed involving the reactive cysteines. Under reducing conditions zinc is bound to the reactive cysteines and the protein is inactive.

The protein localises to the cytoplasm. In terms of biological role, redox regulated molecular chaperone. Protects both thermally unfolding and oxidatively damaged proteins from irreversible aggregation. Plays an important role in the bacterial defense system toward oxidative stress. The sequence is that of 33 kDa chaperonin from Lactobacillus delbrueckii subsp. bulgaricus (strain ATCC BAA-365 / Lb-18).